Consider the following 503-residue polypeptide: MGKRVSHNEGADRRPKKKAKNEKPEKETMESPAADVTVDFGSKSDATYVQSQVLSDMPQSEIDQFLATHSIKVTDTSDAPAVRPIISFSHLPSCDSKLYSSLSSFASPTPIQSATWPLLFAGRDVIGIAETGSGKTLAFGLPCLKKILDSGKIKFKNARPAAVIISPTRELAMQIYDQISKYAGSIGIKATCIFGGVKKDEQREALKSAAIVVATPGRLKDLQNDGSVDLGKVKYLVLDEADRMLDKGFEQDIKDIISSTPDSKRQTVMFTATWPPSVRDLAATFMTSAVTVTIGGDPSADPRANTRIKQTVEVVQSHDKEYRLVQLLSENQRGAAALDKVLVFCLYKKEAMRVERLLRNKNFKVAGIHGDLNQHERFKSLDAFKSGAATVLVATDVAARGLDIPSVKLVINVTFPLTVEDYVHRIGRTGRAGAEGRAITLFTETDKAQSGALINVLKAAKQEVPQELLKFGTTVKKKQHGAYGAFFKEADSGKSATKIVFDD.

Residues 1–13 (MGKRVSHNEGADR) show a composition bias toward basic and acidic residues. The interval 1 to 37 (MGKRVSHNEGADRRPKKKAKNEKPEKETMESPAADVT) is disordered. The short motif at 104–112 (SFASPTPIQ) is the Q motif element. In terms of domain architecture, Helicase ATP-binding spans 116–292 (WPLLFAGRDV…ATFMTSAVTV (177 aa)). ATP is bound at residue 129–136 (AETGSGKT). The DEAD box signature appears at 239 to 242 (DEAD). A Helicase C-terminal domain is found at 323 to 472 (RLVQLLSENQ…EVPQELLKFG (150 aa)).

It belongs to the DEAD box helicase family. DDX5/DBP2 subfamily.

Its subcellular location is the nucleus. It localises to the nucleolus. The enzyme catalyses ATP + H2O = ADP + phosphate + H(+). Functionally, ATP-dependent RNA helicase required for 60S ribosomal subunit synthesis. Involved in efficient pre-rRNA processing, predominantly at site A3, which is necessary for the normal formation of 25S and 5.8S rRNAs. The chain is ATP-dependent RNA helicase dbp3 (dbp3) from Aspergillus clavatus (strain ATCC 1007 / CBS 513.65 / DSM 816 / NCTC 3887 / NRRL 1 / QM 1276 / 107).